A 202-amino-acid polypeptide reads, in one-letter code: Nucleoside triphosphate pyrophosphatase (202 aa).

Asp-79 functions as the Proton acceptor in the catalytic mechanism.

Belongs to the Maf family. A divalent metal cation is required as a cofactor.

The protein localises to the cytoplasm. The catalysed reaction is a ribonucleoside 5'-triphosphate + H2O = a ribonucleoside 5'-phosphate + diphosphate + H(+). It catalyses the reaction a 2'-deoxyribonucleoside 5'-triphosphate + H2O = a 2'-deoxyribonucleoside 5'-phosphate + diphosphate + H(+). In terms of biological role, nucleoside triphosphate pyrophosphatase. May have a dual role in cell division arrest and in preventing the incorporation of modified nucleotides into cellular nucleic acids. In Nitrobacter hamburgensis (strain DSM 10229 / NCIMB 13809 / X14), this protein is Nucleoside triphosphate pyrophosphatase.